The primary structure comprises 246 residues: Proteasome subunit alpha (246 aa).

It belongs to the peptidase T1A family. As to quaternary structure, the 20S proteasome core is composed of 14 alpha and 14 beta subunits that assemble into four stacked heptameric rings, resulting in a barrel-shaped structure. The two inner rings, each composed of seven catalytic beta subunits, are sandwiched by two outer rings, each composed of seven alpha subunits. The catalytic chamber with the active sites is on the inside of the barrel. Has probably a gated structure, the ends of the cylinder being occluded by the N-termini of the alpha-subunits. Is likely capped at one or both ends by the proteasome regulatory ATPase, PAN.

Its subcellular location is the cytoplasm. The formation of the proteasomal ATPase PAN-20S proteasome complex, via the docking of the C-termini of PAN into the intersubunit pockets in the alpha-rings, triggers opening of the gate for substrate entry. Interconversion between the open-gate and close-gate conformations leads to a dynamic regulation of the 20S proteasome proteolysis activity. Its function is as follows. Component of the proteasome core, a large protease complex with broad specificity involved in protein degradation. This chain is Proteasome subunit alpha, found in Archaeoglobus fulgidus (strain ATCC 49558 / DSM 4304 / JCM 9628 / NBRC 100126 / VC-16).